A 304-amino-acid chain; its full sequence is Thiosulfate sulfurtransferase TUM1 (304 aa).

Rhodanese domains follow at residues 20–137 (KVHR…PLDS) and 177–299 (LAKK…PEWI). Positions 191–201 (RFEGTEPEPRS) are enriched in basic and acidic residues. The tract at residues 191–222 (RFEGTEPEPRSDIPSGHIPGTQPLPYGSLLDP) is disordered. The residue at position 201 (S201) is a Phosphoserine. The active-site Cysteine persulfide intermediate is C259. S264 is modified (phosphoserine).

It localises to the mitochondrion. The protein resides in the cytoplasm. The enzyme catalyses thiosulfate + hydrogen cyanide = thiocyanate + sulfite + 2 H(+). Its function is as follows. Sulfur transferase that accepts persulfite from NFS1 and transfers it to UBA4 in the pathway for 2-thiolation of the wobble uridine base of tRNAs. Stimulates sulfur transfer by NFS1. Involved in metabolism of sterol esters in a tRNA thiolation pathway-independent manner. In Saccharomyces cerevisiae (strain ATCC 204508 / S288c) (Baker's yeast), this protein is Thiosulfate sulfurtransferase TUM1.